The primary structure comprises 107 residues: Anti-adapter protein IraM (107 aa).

It belongs to the IraM/RssC family.

It is found in the cytoplasm. Inhibits RpoS proteolysis by regulating RssB activity, thereby increasing the stability of the sigma stress factor RpoS during magnesium starvation. This chain is Anti-adapter protein IraM, found in Escherichia coli (strain K12 / MC4100 / BW2952).